Consider the following 163-residue polypeptide: 3-hydroxyacyl-[acyl-carrier-protein] dehydratase FabZ (163 aa).

His-58 is an active-site residue.

It belongs to the thioester dehydratase family. FabZ subfamily.

The protein localises to the cytoplasm. The catalysed reaction is a (3R)-hydroxyacyl-[ACP] = a (2E)-enoyl-[ACP] + H2O. Its function is as follows. Involved in unsaturated fatty acids biosynthesis. Catalyzes the dehydration of short chain beta-hydroxyacyl-ACPs and long chain saturated and unsaturated beta-hydroxyacyl-ACPs. This is 3-hydroxyacyl-[acyl-carrier-protein] dehydratase FabZ from Francisella tularensis subsp. tularensis (strain FSC 198).